Consider the following 763-residue polypeptide: Protein CHROMATIN REMODELING 19 (763 aa).

Disordered stretches follow at residues 1-43 (MKRD…TPSI) and 114-149 (EDEE…RGED). The span at 23 to 34 (VLKRPRTPKKTR) shows a compositional bias: basic residues. Residues 114 to 135 (EDEEASDDDDDEAESSASEDEF) show a composition bias toward acidic residues. In terms of domain architecture, Helicase ATP-binding spans 226–404 (LLYKKGIEGA…WSLLEFMLPD (179 aa)). 239–246 (DEMGLGKT) provides a ligand contact to ATP. The short motif at 353–356 (DEAH) is the DEAH box element. Residues 462–482 (RKQEDAYKEAIEEYRAASQAR) are a coiled coil. The short motif at 520–527 (IRRIYSDE) is the Nuclear localization signal element. The Helicase C-terminal domain maps to 592-742 (TLAELLPSMK…AAVLESGVHV (151 aa)).

The protein belongs to the SNF2/RAD54 helicase family. In terms of assembly, interacts with SUVR2 and itself.

The protein localises to the nucleus. In terms of biological role, DNA helicase that possesses intrinsic ATP-dependent nucleosome-remodeling activity and is both required for DNA repair and heterochromatin organization. Promotes DNA end resection of double-strand breaks (DSBs) following DNA damage: probably acts by weakening histone DNA interactions in nucleosomes flanking DSBs. Probable chromatin remodeling factor. Probable helicase-like transcription factor involved in transcriptional gene silencing. Associates with SUVR2 and contributes to transcriptional gene silencing at RNA-directed DNA methylation (RdDM) target loci but also at RdDM-independent target loci. May be involved in nucleosome positioning to form ordered nucleosome arrays on chromatin. This Arabidopsis thaliana (Mouse-ear cress) protein is Protein CHROMATIN REMODELING 19.